The following is a 688-amino-acid chain: Potassium-transporting ATPase ATP-binding subunit (688 aa).

Helical transmembrane passes span Phe37–Ile57, Ile65–Ile85, Ile219–Leu239, and Leu262–Ile282. Catalysis depends on Asp313, which acts as the 4-aspartylphosphate intermediate. ATP-binding positions include Asp350, Glu354, Phe383–Ser390, and Lys401. Mg(2+)-binding residues include Asp524 and Asp528. Transmembrane regions (helical) follow at residues Ile586–Pro606, Ala622–Leu642, and Ile668–Val688.

The protein belongs to the cation transport ATPase (P-type) (TC 3.A.3) family. Type IA subfamily. The system is composed of three essential subunits: KdpA, KdpB and KdpC.

Its subcellular location is the cell membrane. It carries out the reaction K(+)(out) + ATP + H2O = K(+)(in) + ADP + phosphate + H(+). Part of the high-affinity ATP-driven potassium transport (or Kdp) system, which catalyzes the hydrolysis of ATP coupled with the electrogenic transport of potassium into the cytoplasm. This subunit is responsible for energy coupling to the transport system and for the release of the potassium ions to the cytoplasm. The chain is Potassium-transporting ATPase ATP-binding subunit from Clostridium perfringens (strain ATCC 13124 / DSM 756 / JCM 1290 / NCIMB 6125 / NCTC 8237 / Type A).